The chain runs to 534 residues: Putative fimbrium tip subunit Fim1C (534 aa).

A signal peptide spans 1-21; it reads MKQYKLMQVALLAILLFGWAG. Residue C22 is the site of N-palmitoyl cysteine attachment. C22 carries the S-diacylglycerol cysteine lipid modification. Residues 22 to 54 constitute a propeptide that is removed on maturation; it reads CSQNEEEVPGNVRNGIVLNVTDTGIISNEPSTR.

Belongs to the bacteroidetes fimbrillin superfamily. Mfa-like family. In terms of assembly, may be part of the fimbrial tip.

It localises to the fimbrium. The protein resides in the cell outer membrane. Its function is as follows. Probably a component of the fimbrium tip. Fimbriae are filamentous appendages on the cell surface that mediate cell adhesion and biofilm formation. The sequence is that of Putative fimbrium tip subunit Fim1C from Bacteroides ovatus (strain ATCC 8483 / DSM 1896 / JCM 5824 / BCRC 10623 / CCUG 4943 / NCTC 11153).